A 317-amino-acid polypeptide reads, in one-letter code: MYTKIIGTGSYLPEQVRTNADLEKMVETSDEWIVTRTGIRERHIAAPDETVATMGFTAANRAIEMAGIDKDQIGLIVVATTSATHAFPSAACQIQSMLGIKGCPAFDVAAACAGFTYALSIADQYVKSGAVKHALVVGSDVLARTCDPGDRGTIIIFGDGAGAAVLSASEEPGIISTHLHADGRYGELLTLPNADRVNPDNPIYLTMAGNEVFKVAVTELAHIVDETLAANNLDRSELDWLVPHQANLRIISATAKKLGMSMDNVVVTLDRHGNTSAASVPCALDEAVRDGRIKAGQLVLLEAFGGGFTWGSALIRF.

Active-site residues include Cys-112 and His-244. The interval 245-249 is ACP-binding; sequence QANLR. Asn-274 is a catalytic residue.

It belongs to the thiolase-like superfamily. FabH family. In terms of assembly, homodimer.

It localises to the cytoplasm. The enzyme catalyses malonyl-[ACP] + acetyl-CoA + H(+) = 3-oxobutanoyl-[ACP] + CO2 + CoA. Its pathway is lipid metabolism; fatty acid biosynthesis. Functionally, catalyzes the condensation reaction of fatty acid synthesis by the addition to an acyl acceptor of two carbons from malonyl-ACP. Catalyzes the first condensation reaction which initiates fatty acid synthesis and may therefore play a role in governing the total rate of fatty acid production. Possesses both acetoacetyl-ACP synthase and acetyl transacylase activities. Its substrate specificity determines the biosynthesis of branched-chain and/or straight-chain of fatty acids. The chain is Beta-ketoacyl-[acyl-carrier-protein] synthase III from Salmonella paratyphi A (strain ATCC 9150 / SARB42).